The following is a 54-amino-acid chain: Photoreceptor disk component PRCD (54 aa).

The S-palmitoyl cysteine moiety is linked to residue C2. Residues 25 to 54 (PEPSDVDGAARGSSLDADPQSSGREKEPLK) form a disordered region.

This sequence belongs to the PRCD family. In terms of assembly, interacts with RHO/rhodopsin; the interaction promotes PRCD stability. In terms of processing, palmitoylated at Cys-2. Palmitoylation is essential for protein stability and trafficking to the photoreceptor outer segment, but does not appear to be essential for membrane localization. Probably palmitoylated by ZDHHC3. Post-translationally, phosphorylated.

Its subcellular location is the cell projection. The protein resides in the cilium. It localises to the photoreceptor outer segment. The protein localises to the membrane. It is found in the endoplasmic reticulum. Its subcellular location is the golgi apparatus. Involved in vision. This chain is Photoreceptor disk component PRCD, found in Homo sapiens (Human).